A 117-amino-acid chain; its full sequence is Regulator of ribonuclease activity B (117 aa).

This sequence belongs to the RraB family. Interacts with the C-terminal region of Rne.

Its subcellular location is the cytoplasm. In terms of biological role, globally modulates RNA abundance by binding to RNase E (Rne) and regulating its endonucleolytic activity. Can modulate Rne action in a substrate-dependent manner by altering the composition of the degradosome. This is Regulator of ribonuclease activity B from Pseudoalteromonas atlantica (strain T6c / ATCC BAA-1087).